The chain runs to 554 residues: Glutamine--tRNA ligase (554 aa).

A 'HIGH' region motif is present at residues 34–44 (PEPNGYLHIGH). Residues 35–37 (EPN) and 41–47 (HIGHAKS) contribute to the ATP site. 2 residues coordinate L-glutamine: aspartate 67 and tyrosine 212. ATP-binding positions include threonine 231, 261-262 (RL), and 269-271 (MSK). A 'KMSKS' region motif is present at residues 268–272 (VMSKR). The tract at residues 317–324 (TKQDNTIE) is interaction with tRNA.

This sequence belongs to the class-I aminoacyl-tRNA synthetase family. In terms of assembly, monomer.

Its subcellular location is the cytoplasm. It catalyses the reaction tRNA(Gln) + L-glutamine + ATP = L-glutaminyl-tRNA(Gln) + AMP + diphosphate. The chain is Glutamine--tRNA ligase from Escherichia coli O157:H7.